The chain runs to 504 residues: Glycerol kinase (504 aa).

Thr14 is an ADP binding site. 3 residues coordinate ATP: Thr14, Thr15, and Ser16. Thr14 lines the sn-glycerol 3-phosphate pocket. Arg18 serves as a coordination point for ADP. 4 residues coordinate sn-glycerol 3-phosphate: Arg84, Glu85, Tyr136, and Asp246. Positions 84, 85, 136, 246, and 247 each coordinate glycerol. ADP contacts are provided by Thr268 and Gly311. Residues Thr268, Gly311, Gln315, and Gly412 each contribute to the ATP site. Positions 412 and 416 each coordinate ADP.

Belongs to the FGGY kinase family.

The catalysed reaction is glycerol + ATP = sn-glycerol 3-phosphate + ADP + H(+). It participates in polyol metabolism; glycerol degradation via glycerol kinase pathway; sn-glycerol 3-phosphate from glycerol: step 1/1. Its activity is regulated as follows. Inhibited by fructose 1,6-bisphosphate (FBP). Functionally, key enzyme in the regulation of glycerol uptake and metabolism. Catalyzes the phosphorylation of glycerol to yield sn-glycerol 3-phosphate. This Aliivibrio salmonicida (strain LFI1238) (Vibrio salmonicida (strain LFI1238)) protein is Glycerol kinase.